Consider the following 94-residue polypeptide: Cytochrome b-c1 complex subunit 8, mitochondrial (94 aa).

At 2–49 the chain is on the mitochondrial matrix side; the sequence is GPPSGKTYMGWWGHMGGPKQKGITSYAVSPYAQKPLQGIFHNAVFNSF. Residues 50–80 traverse the membrane as a helical segment; the sequence is RRFKSQFLYVLIPAGIYWYWWKNGNEYNEFL. Residues 81–94 are Mitochondrial intermembrane-facing; it reads YSKAGREELERVNV.

This sequence belongs to the UQCRQ/QCR8 family. In terms of assembly, component of the ubiquinol-cytochrome c oxidoreductase (cytochrome b-c1 complex, complex III, CIII), a multisubunit enzyme composed of 10 subunits. The complex is composed of 3 respiratory subunits cytochrome b (COB), cytochrome c1 (CYT1) and Rieske protein (RIP1), 2 core protein subunits COR1 and QCR2, and 5 low-molecular weight protein subunits QCR6, QCR7, QCR8, QCR9 and QCR10. The complex exists as an obligatory dimer and forms supercomplexes (SCs) in the inner mitochondrial membrane with a monomer or a dimer of cytochrome c oxidase (complex IV, CIV), resulting in 2 different assemblies (supercomplexes III(2)IV and III(2)IV(2)).

Its subcellular location is the mitochondrion inner membrane. Its function is as follows. Component of the ubiquinol-cytochrome c oxidoreductase, a multisubunit transmembrane complex that is part of the mitochondrial electron transport chain which drives oxidative phosphorylation. The respiratory chain contains 3 multisubunit complexes succinate dehydrogenase (complex II, CII), ubiquinol-cytochrome c oxidoreductase (cytochrome b-c1 complex, complex III, CIII) and cytochrome c oxidase (complex IV, CIV), that cooperate to transfer electrons derived from NADH and succinate to molecular oxygen, creating an electrochemical gradient over the inner membrane that drives transmembrane transport and the ATP synthase. The cytochrome b-c1 complex catalyzes electron transfer from ubiquinol to cytochrome c, linking this redox reaction to translocation of protons across the mitochondrial inner membrane, with protons being carried across the membrane as hydrogens on the quinol. In the process called Q cycle, 2 protons are consumed from the matrix, 4 protons are released into the intermembrane space and 2 electrons are passed to cytochrome c. The polypeptide is Cytochrome b-c1 complex subunit 8, mitochondrial (QCR8) (Saccharomyces cerevisiae (strain ATCC 204508 / S288c) (Baker's yeast)).